Consider the following 611-residue polypeptide: Phosphoenolpyruvate carboxykinase [GTP] (611 aa).

Substrate-binding positions include Arg-82 and 222–224 (YGG). Positions 231 and 251 each coordinate Mn(2+). Position 273 (Ser-273) interacts with substrate. 274 to 279 (ACGKTN) contacts GTP. The active site involves Cys-275. Asp-298 contributes to the Mn(2+) binding site. 389 to 391 (NSR) contributes to the substrate binding site. GTP-binding positions include Arg-391, Arg-422, and 517–520 (FGDN).

Belongs to the phosphoenolpyruvate carboxykinase [GTP] family. In terms of assembly, monomer. Requires Mn(2+) as cofactor.

The protein localises to the cytoplasm. It carries out the reaction oxaloacetate + GTP = phosphoenolpyruvate + GDP + CO2. Its pathway is carbohydrate biosynthesis; gluconeogenesis. Functionally, catalyzes the conversion of oxaloacetate (OAA) to phosphoenolpyruvate (PEP), the rate-limiting step in the metabolic pathway that produces glucose from lactate and other precursors derived from the citric acid cycle. The polypeptide is Phosphoenolpyruvate carboxykinase [GTP] (Arthrobacter sp. (strain FB24)).